The primary structure comprises 948 residues: Translation initiation factor IF-2 (948 aa).

Disordered regions lie at residues 61–120, 162–243, and 255–285; these read IQAN…PALI, KSRE…TQSA, and QEKDKQEAKKAKKPSKPKATPTAKNNKSHKI. Residues 68–78 are compositionally biased toward basic and acidic residues; that stretch reads KNPEQDNKDDL. Over residues 173–189 the composition is skewed to low complexity; sequence SNTNNANSTNNANNVNN. The span at 190-207 shows a compositional bias: basic and acidic residues; it reads AKKEISEVKKQEQEIKRH. The segment covering 208–219 has biased composition (basic residues); that stretch reads ENIKRRTGFRVI. Polar residues predominate over residues 230 to 243; it reads ENSVAESKKPTQSA. Residues 447 to 616 enclose the tr-type G domain; the sequence is ERPPVVTIMG…LIQADIMELK (170 aa). Residues 456–463 form a G1 region; sequence GHVDHGKT. 456–463 is a binding site for GTP; it reads GHVDHGKT. The interval 481–485 is G2; sequence GITQH. A G3 region spans residues 502 to 505; that stretch reads DTPG. GTP contacts are provided by residues 502-506 and 556-559; these read DTPGH and NKMD. The G4 stretch occupies residues 556–559; the sequence is NKMD. A G5 region spans residues 592–594; sequence SAK.

It belongs to the TRAFAC class translation factor GTPase superfamily. Classic translation factor GTPase family. IF-2 subfamily.

It localises to the cytoplasm. Functionally, one of the essential components for the initiation of protein synthesis. Protects formylmethionyl-tRNA from spontaneous hydrolysis and promotes its binding to the 30S ribosomal subunits. Also involved in the hydrolysis of GTP during the formation of the 70S ribosomal complex. The sequence is that of Translation initiation factor IF-2 from Helicobacter pylori (strain Shi470).